The sequence spans 196 residues: GTP cyclohydrolase-2 (196 aa).

Position 49 to 53 (Arg49 to Glu53) interacts with GTP. Residues Cys54, Cys65, and Cys67 each coordinate Zn(2+). Residues Gln70, Glu92–Arg94, and Thr114 each bind GTP. Asp126 acts as the Proton acceptor in catalysis. Residue Arg128 is the Nucleophile of the active site. GTP is bound by residues Thr149 and Lys154.

This sequence belongs to the GTP cyclohydrolase II family. In terms of assembly, homodimer. Zn(2+) serves as cofactor.

The enzyme catalyses GTP + 4 H2O = 2,5-diamino-6-hydroxy-4-(5-phosphoribosylamino)-pyrimidine + formate + 2 phosphate + 3 H(+). It functions in the pathway cofactor biosynthesis; riboflavin biosynthesis; 5-amino-6-(D-ribitylamino)uracil from GTP: step 1/4. In terms of biological role, catalyzes the conversion of GTP to 2,5-diamino-6-ribosylamino-4(3H)-pyrimidinone 5'-phosphate (DARP), formate and pyrophosphate. This chain is GTP cyclohydrolase-2, found in Shigella dysenteriae serotype 1 (strain Sd197).